The sequence spans 359 residues: Membrane-bound lytic murein transglycosylase C (359 aa).

Positions 1–16 (MKKYLALALIAPLLIS) are cleaved as a signal peptide. Cys-17 is lipidated: N-palmitoyl cysteine. Cys-17 is lipidated: S-diacylglycerol cysteine.

Belongs to the transglycosylase Slt family.

It is found in the cell outer membrane. The catalysed reaction is Exolytic cleavage of the (1-&gt;4)-beta-glycosidic linkage between N-acetylmuramic acid (MurNAc) and N-acetylglucosamine (GlcNAc) residues in peptidoglycan, from either the reducing or the non-reducing ends of the peptidoglycan chains, with concomitant formation of a 1,6-anhydrobond in the MurNAc residue.. Functionally, murein-degrading enzyme. May play a role in recycling of muropeptides during cell elongation and/or cell division. In Escherichia coli O127:H6 (strain E2348/69 / EPEC), this protein is Membrane-bound lytic murein transglycosylase C.